We begin with the raw amino-acid sequence, 269 residues long: MEDKNSVIVFKNVSFQYQSDASFTLKDVSFSIPKGQWTSIVGHNGSGKSTIAKLMIGIEKVKSGEIFYNNQTITDDNFEKLRKDIGIVFQNPDNQFVGSIVKYDVAFGLENHAVPHDEMHRRVGEALKQVDMLERADYEPNALSGGQKQRVAIASVLALNPSVIILDEATSMLDPDARQNLLDLVRKVKSEHNITIISITHDLSEAMEADHVIVMNKGTVYKEGTAIEIFDHAEELTTIGLDLPFPIKINQMLGYQTSFLTYEGLVDQL.

Residues 8-242 (IVFKNVSFQY…AEELTTIGLD (235 aa)) enclose the ABC transporter domain. 42–49 (GHNGSGKS) lines the ATP pocket.

It belongs to the ABC transporter superfamily. Energy-coupling factor EcfA family. Forms a stable energy-coupling factor (ECF) transporter complex composed of 2 membrane-embedded substrate-binding proteins (S component), 2 ATP-binding proteins (A component) and 2 transmembrane proteins (T component).

The protein resides in the cell membrane. In terms of biological role, ATP-binding (A) component of a common energy-coupling factor (ECF) ABC-transporter complex. Unlike classic ABC transporters this ECF transporter provides the energy necessary to transport a number of different substrates. The chain is Energy-coupling factor transporter ATP-binding protein EcfA1 from Staphylococcus aureus (strain MSSA476).